We begin with the raw amino-acid sequence, 359 residues long: Heme A synthase (359 aa).

Transmembrane regions (helical) follow at residues 8–28, 94–114, 124–144, 159–179, and 215–235; these read IMSI…VVGG, LLGR…CYLK, LLLI…MVKS, GHLL…LIII, and IIIF…GLDA. A heme-binding site is contributed by histidine 274. 3 helical membrane passes run 276 to 296, 303 to 323, and 328 to 348; these read WFGI…IILN, MGMV…ITLL, and ILAA…FLFI. Heme is bound at residue histidine 334.

The protein belongs to the COX15/CtaA family. Type 2 subfamily. In terms of assembly, interacts with CtaB. Heme b is required as a cofactor.

The protein localises to the cell membrane. The catalysed reaction is Fe(II)-heme o + 2 A + H2O = Fe(II)-heme a + 2 AH2. It functions in the pathway porphyrin-containing compound metabolism; heme A biosynthesis; heme A from heme O: step 1/1. Functionally, catalyzes the conversion of heme O to heme A by two successive hydroxylations of the methyl group at C8. The first hydroxylation forms heme I, the second hydroxylation results in an unstable dihydroxymethyl group, which spontaneously dehydrates, resulting in the formyl group of heme A. This is Heme A synthase from Orientia tsutsugamushi (strain Boryong) (Rickettsia tsutsugamushi).